Consider the following 209-residue polypeptide: PRA1 family protein A1 (209 aa).

4 consecutive transmembrane segments (helical) span residues leucine 51 to arginine 73, isoleucine 77 to serine 99, valine 144 to leucine 164, and valine 166 to proline 186.

Belongs to the PRA1 family.

It localises to the endoplasmic reticulum membrane. Functionally, may be involved in both secretory and endocytic intracellular trafficking in the endosomal/prevacuolar compartments. The chain is PRA1 family protein A1 (PRA1A1) from Arabidopsis thaliana (Mouse-ear cress).